Reading from the N-terminus, the 943-residue chain is MGLTKQYLRYVASAVFGVIGSQKGNIVFVTLRGEKGRYVAVPACEHVFIWDLRKGEKILILQGLKQEVTCLCPSPDGLHLAVGYEDGSIRIFSLLSGEGNVTFNGHKAAITTLKYDQLGGRLASGSKDTDIIVWDVINESGLYRLKGHKDAITQALFLREKNLLVTSGKDTMVKWWDLDTQHCFKTMVGHRTEVWGLVLLSEEKRLITGASDSELRVWDIAYLQEIEDPEEPDPKKIKGSSPGIQDTLEAEDGAFETDEAPEDRILSCRKAGSIMREGRDRVVNLAVDKTGRILACHGTDSVLELFCILSKKEIQKKMDKKMKKARKKAKLHSSKGEEEDPEVNVEMSLQDEIQRVTNIKTSAKIKSFDLIHSPHGELKAVFLLQNNLVELYSLNPSLPTPQPVRTSRITIGGHRSDVRTLSFSSDNIAVLSAAADSIKIWNRSTLQCIRTMTCEYALCSFFVPGDRQVVIGTKTGKLQLYDLASGNLLETIDAHDGALWSMSLSPDQRGFVTGGADKSVKFWDFELVKDENSTQKRLSVKQTRTLQLDEDVLCVSYSPNQKLLAVSLLDCTVKIFYVDTLKFFLSLYGHKLPVICMDISHDGALIATGSADRNVKIWGLDFGDCHKSLFAHDDSVMYLQFVPKSHLFFTAGKDHKIKQWDADKFEHIQTLEGHHQEIWCLAVSPSGDYVVSSSHDKSLRLWERTREPLILEEEREMEREAEYEESVAKEDQPAVPGETQGDSYFTGKKTIETVKAAERIMEAIELYREETAKMKEHKAICKAAGKEVPLPSNPILMAYGSISPSAYVLEIFKGIKSSELEESLLVLPFSYVPDILKLFNEFIQLGSDVELICRCLFFLLRIHFGQITSNQMLVPVIEKLRETTISKVSQVRDVIGFNMAGLDYLKRECEAKSEVMFFADATSHLEEKKRKRKKREKLILTLT.

5 WD repeats span residues 21–60, 63–102, 105–144, 147–186, and 189–228; these read SQKGNIVFVTLRGEKGRYVAVPACEHVFIWDLRKGEKILI, GLKQEVTCLCPSPDGLHLAVGYEDGSIRIFSLLSGEGNVT, GHKAAITTLKYDQLGGRLASGSKDTDIIVWDVINESGLYR, GHKDAITQALFLREKNLLVTSGKDTMVKWWDLDTQHCFKT, and GHRTEVWGLVLLSEEKRLITGASDSELRVWDIAYLQEIED. 2 positions are modified to phosphoserine: Ser-240 and Ser-241. Thr-257 carries the post-translational modification Phosphothreonine. Residues 277-316 form a WD 6 repeat; that stretch reads EGRDRVVNLAVDKTGRILACHGTDSVLELFCILSKKEIQK. Residues 326 to 345 are disordered; the sequence is RKKAKLHSSKGEEEDPEVNV. WD repeat units follow at residues 413–451, 453–493, 494–533, 547–586, 589–630, 631–670, and 673–712; these read GHRSDVRTLSFSSDNIAVLSAAADSIKIWNRSTLQCIRT, TCEY…ETID, AHDGALWSMSLSPDQRGFVTGGADKSVKFWDFELVKDENS, QLDEDVLCVSYSPNQKLLAVSLLDCTVKIFYVDTLKFFLS, GHKL…KSLF, AHDDSVMYLQFVPKSHLFFTAGKDHKIKQWDADKFEHIQT, and GHHQEIWCLAVSPSGDYVVSSSHDKSLRLWERTREPLILE. Glycyl lysine isopeptide (Lys-Gly) (interchain with G-Cter in SUMO2) cross-links involve residues Lys-474 and Lys-529. Position 726 is a phosphoserine (Ser-726).

The protein belongs to the WD repeat WDR3/UTP12 family. As to quaternary structure, part of the small subunit (SSU) processome, composed of more than 70 proteins and the RNA chaperone small nucleolar RNA (snoRNA) U3. Ubiquitous.

Its subcellular location is the nucleus. It localises to the nucleolus. Part of the small subunit (SSU) processome, first precursor of the small eukaryotic ribosomal subunit. During the assembly of the SSU processome in the nucleolus, many ribosome biogenesis factors, an RNA chaperone and ribosomal proteins associate with the nascent pre-rRNA and work in concert to generate RNA folding, modifications, rearrangements and cleavage as well as targeted degradation of pre-ribosomal RNA by the RNA exosome. In Homo sapiens (Human), this protein is WD repeat-containing protein 3.